The sequence spans 416 residues: Phosphoglycerate kinase (416 aa).

Substrate-binding positions include Asp24–Asn26, Arg40, His63–Arg66, Arg126, and Arg166. Residues Lys216, Gly304, Glu335, and Gly364–Ser367 each bind ATP.

It belongs to the phosphoglycerate kinase family. Monomer.

Its subcellular location is the cytoplasm. It carries out the reaction (2R)-3-phosphoglycerate + ATP = (2R)-3-phospho-glyceroyl phosphate + ADP. It functions in the pathway carbohydrate degradation; glycolysis; pyruvate from D-glyceraldehyde 3-phosphate: step 2/5. This is Phosphoglycerate kinase from Mycobacterium leprae (strain Br4923).